Reading from the N-terminus, the 191-residue chain is Guanylate kinase (191 aa).

The Guanylate kinase-like domain occupies 8–188 (GRLVVLAGPS…AVSDIKEILV (181 aa)). Position 15-22 (15-22 (GPSAVGKS)) interacts with ATP.

This sequence belongs to the guanylate kinase family.

The protein resides in the cytoplasm. The catalysed reaction is GMP + ATP = GDP + ADP. In terms of biological role, essential for recycling GMP and indirectly, cGMP. The polypeptide is Guanylate kinase (Corynebacterium diphtheriae (strain ATCC 700971 / NCTC 13129 / Biotype gravis)).